We begin with the raw amino-acid sequence, 384 residues long: Anhydro-N-acetylmuramic acid kinase (384 aa).

17–24 (GTSMDGVD) is a binding site for ATP.

Belongs to the anhydro-N-acetylmuramic acid kinase family.

The enzyme catalyses 1,6-anhydro-N-acetyl-beta-muramate + ATP + H2O = N-acetyl-D-muramate 6-phosphate + ADP + H(+). It participates in amino-sugar metabolism; 1,6-anhydro-N-acetylmuramate degradation. Its pathway is cell wall biogenesis; peptidoglycan recycling. In terms of biological role, catalyzes the specific phosphorylation of 1,6-anhydro-N-acetylmuramic acid (anhMurNAc) with the simultaneous cleavage of the 1,6-anhydro ring, generating MurNAc-6-P. Is required for the utilization of anhMurNAc either imported from the medium or derived from its own cell wall murein, and thus plays a role in cell wall recycling. This Burkholderia thailandensis (strain ATCC 700388 / DSM 13276 / CCUG 48851 / CIP 106301 / E264) protein is Anhydro-N-acetylmuramic acid kinase.